Consider the following 124-residue polypeptide: Large ribosomal subunit protein bL12 (124 aa).

Belongs to the bacterial ribosomal protein bL12 family. As to quaternary structure, homodimer. Part of the ribosomal stalk of the 50S ribosomal subunit. Forms a multimeric L10(L12)X complex, where L10 forms an elongated spine to which 2 to 4 L12 dimers bind in a sequential fashion. Binds GTP-bound translation factors.

In terms of biological role, forms part of the ribosomal stalk which helps the ribosome interact with GTP-bound translation factors. Is thus essential for accurate translation. This is Large ribosomal subunit protein bL12 from Cereibacter sphaeroides (strain ATCC 17025 / ATH 2.4.3) (Rhodobacter sphaeroides).